The primary structure comprises 252 residues: Imidazole glycerol phosphate synthase subunit HisF (252 aa).

Catalysis depends on residues Asp-11 and Asp-130.

This sequence belongs to the HisA/HisF family. As to quaternary structure, heterodimer of HisH and HisF.

The protein localises to the cytoplasm. It catalyses the reaction 5-[(5-phospho-1-deoxy-D-ribulos-1-ylimino)methylamino]-1-(5-phospho-beta-D-ribosyl)imidazole-4-carboxamide + L-glutamine = D-erythro-1-(imidazol-4-yl)glycerol 3-phosphate + 5-amino-1-(5-phospho-beta-D-ribosyl)imidazole-4-carboxamide + L-glutamate + H(+). It participates in amino-acid biosynthesis; L-histidine biosynthesis; L-histidine from 5-phospho-alpha-D-ribose 1-diphosphate: step 5/9. Its function is as follows. IGPS catalyzes the conversion of PRFAR and glutamine to IGP, AICAR and glutamate. The HisF subunit catalyzes the cyclization activity that produces IGP and AICAR from PRFAR using the ammonia provided by the HisH subunit. This chain is Imidazole glycerol phosphate synthase subunit HisF, found in Bacillus thuringiensis (strain Al Hakam).